The primary structure comprises 299 residues: Elongation factor Ts (299 aa).

The involved in Mg(2+) ion dislocation from EF-Tu stretch occupies residues 81 to 84; that stretch reads TDFV.

This sequence belongs to the EF-Ts family.

It localises to the cytoplasm. Associates with the EF-Tu.GDP complex and induces the exchange of GDP to GTP. It remains bound to the aminoacyl-tRNA.EF-Tu.GTP complex up to the GTP hydrolysis stage on the ribosome. This chain is Elongation factor Ts, found in Halothermothrix orenii (strain H 168 / OCM 544 / DSM 9562).